Reading from the N-terminus, the 250-residue chain is Peptidyl-tRNA hydrolase, mitochondrial (250 aa).

The transit peptide at 1-45 (MRLLSGASASRIPCPLLSLARARARCLPVPASATACRAASSSAAA) directs the protein to the mitochondrion. Position 68 (Tyr68) interacts with tRNA. His73 (proton acceptor) is an active-site residue. Residues Phe118, Asn120, and Asn166 each coordinate tRNA.

It belongs to the PTH family.

It localises to the mitochondrion. It catalyses the reaction an N-acyl-L-alpha-aminoacyl-tRNA + H2O = an N-acyl-L-amino acid + a tRNA + H(+). Functionally, the natural substrate for this enzyme may be peptidyl-tRNAs which drop off the ribosome during protein synthesis. The sequence is that of Peptidyl-tRNA hydrolase, mitochondrial from Oryza sativa subsp. japonica (Rice).